We begin with the raw amino-acid sequence, 87 residues long: U14-lycotoxin-Ls1c (87 aa).

Residues 1–20 (MNSKVFAVLLLLALLTCILS) form the signal peptide. The WAP domain occupies 21–66 (EKYCPTPRNTSCKKMNIKNNCCRDSDCTSNAFCCAEPCGNFCHKAS). Cystine bridges form between Cys-24–Cys-54, Cys-32–Cys-58, Cys-41–Cys-53, Cys-42–Cys-80, and Cys-47–Cys-62.

Belongs to the venom protein 11 family. 01 (wap-1) subfamily. In terms of processing, contains 5 disulfide bonds. As to expression, expressed by the venom gland.

Its subcellular location is the secreted. Has antibacterial activity. The sequence is that of U14-lycotoxin-Ls1c from Lycosa singoriensis (Wolf spider).